Here is a 413-residue protein sequence, read N- to C-terminus: MSAVKVQLVPWTEKYRPARIADVVGNEEAKKKYVAWINSWVKGKPSKKAALLYGPPGSGKTSIVHATAKEFSWELIELNASDVRTREALQQRLLGALNTRSVLGYSGKIILLDEVDGISTKEDAGGLQAIVELIEKSNWPIVLTANDPWDPKLRPLRDLCELIEFKKIGKRDIMKVLENICSKEGVECSREVLSAIADNAKGDLRAAINDLQSLAMGKKTISLADLQILGDRAEQETIFDIVRSVLTAKYPEQALAVTRLPSLDYEMLMQWLSENIVYQYEPSLQAIADAYDALSWADIMLTRMKREQQWALLSYALELMTAGVASARERPPFKFVKYSFPEKLRILARSKEKREKFVRAVRGAAAKIHVSTSKFRTDVLPYLRVIYEHDKKRALEILRNLGVPEDALELATQ.

54-61 (GPPGSGKT) is a binding site for ATP.

The protein belongs to the activator 1 small subunits family. RfcL subfamily. In terms of assembly, heteromultimer composed of small subunits (RfcS) and large subunits (RfcL).

Part of the RFC clamp loader complex which loads the PCNA sliding clamp onto DNA. This chain is Replication factor C large subunit, found in Thermofilum pendens (strain DSM 2475 / Hrk 5).